Consider the following 409-residue polypeptide: Epoxyqueuosine reductase (409 aa).

Positions 1 to 23 are disordered; that stretch reads MDRNPELAIADARPSQDGRAAPS. Aspartate 178 (proton donor) is an active-site residue. The region spanning 232–261 is the 4Fe-4S ferredoxin-type domain; that stretch reads AAPETPGAHCGSCTRCLGACPTGAIVAPYR. Positions 241, 244, 247, 251, 267, 294, 297, and 301 each coordinate [4Fe-4S] cluster.

This sequence belongs to the QueG family. As to quaternary structure, monomer. Cob(II)alamin is required as a cofactor. Requires [4Fe-4S] cluster as cofactor.

The protein localises to the cytoplasm. The catalysed reaction is epoxyqueuosine(34) in tRNA + AH2 = queuosine(34) in tRNA + A + H2O. It functions in the pathway tRNA modification; tRNA-queuosine biosynthesis. In terms of biological role, catalyzes the conversion of epoxyqueuosine (oQ) to queuosine (Q), which is a hypermodified base found in the wobble positions of tRNA(Asp), tRNA(Asn), tRNA(His) and tRNA(Tyr). This Burkholderia pseudomallei (strain K96243) protein is Epoxyqueuosine reductase.